The following is a 111-amino-acid chain: uncharacterized protein (111 aa).

Residues 4–111 form the HIT domain; that stretch reads IFERIIEGAV…LGGGLLGSIA (108 aa). A Histidine triad motif motif is present at residues 96–100; the sequence is HLHIH.

This is an uncharacterized protein from Chlamydia trachomatis serovar D (strain ATCC VR-885 / DSM 19411 / UW-3/Cx).